The sequence spans 369 residues: Caffeine synthase 1 (369 aa).

Tyrosine 24 provides a ligand contact to S-adenosyl-L-homocysteine. Threonine 31 is a caffeine binding site. 6 residues coordinate S-adenosyl-L-homocysteine: cysteine 66, asparagine 71, aspartate 103, leucine 104, serine 138, and phenylalanine 139. Residues tyrosine 156, histidine 159, and tryptophan 160 each contribute to the caffeine site. A Mg(2+)-binding site is contributed by asparagine 177. Arginine 225 lines the caffeine pocket. Aspartate 263, phenylalanine 265, and asparagine 266 together coordinate Mg(2+). Phenylalanine 321 serves as a coordination point for caffeine.

Belongs to the methyltransferase superfamily. Type-7 methyltransferase family. The cofactor is Mg(2+).

The enzyme catalyses theobromine + S-adenosyl-L-methionine = caffeine + S-adenosyl-L-homocysteine + H(+). The catalysed reaction is 7-methylxanthine + S-adenosyl-L-methionine = theobromine + S-adenosyl-L-homocysteine + H(+). It functions in the pathway alkaloid biosynthesis. Involved in the biosynthesis of caffeine. Catalyzes the conversion of 7-methylxanthine (7mX) to theobromine and of theobromine to caffeine. This Camellia crassicolumna (Evergreen tea) protein is Caffeine synthase 1.